We begin with the raw amino-acid sequence, 90 residues long: Small ribosomal subunit protein bS20 (90 aa).

Residues Met1–Arg25 form a disordered region.

This sequence belongs to the bacterial ribosomal protein bS20 family.

In terms of biological role, binds directly to 16S ribosomal RNA. This chain is Small ribosomal subunit protein bS20, found in Burkholderia multivorans (strain ATCC 17616 / 249).